Reading from the N-terminus, the 598-residue chain is Glutamine--fructose-6-phosphate aminotransferase [isomerizing] (598 aa).

Catalysis depends on C2, which acts as the Nucleophile; for GATase activity. Residues 2–218 form the Glutamine amidotransferase type-2 domain; that stretch reads CGIVGYIGNN…DLSLGYASKD (217 aa). SIS domains lie at 277 to 421 and 450 to 588; these read VFDE…KRNL and LSKR…VDMP. K593 serves as the catalytic For Fru-6P isomerization activity.

In terms of assembly, homodimer.

Its subcellular location is the cytoplasm. It carries out the reaction D-fructose 6-phosphate + L-glutamine = D-glucosamine 6-phosphate + L-glutamate. Functionally, catalyzes the first step in hexosamine metabolism, converting fructose-6P into glucosamine-6P using glutamine as a nitrogen source. This is Glutamine--fructose-6-phosphate aminotransferase [isomerizing] from Campylobacter jejuni subsp. jejuni serotype O:2 (strain ATCC 700819 / NCTC 11168).